The chain runs to 473 residues: MENEMKHSNDALHVVMFPFFAFGHISPFVQLANKLSSYGVKVSFFTASGNASRVKSMLNSAPTTHIVPLTLPHVEGLPPGAESTAELTPASAELLKVALDLMQPQIKTLLSHLKPHFVLFDFAQEWLPKMANGLGIKTVYYSVVVALSTAFLTCPARVLEPKKYPSLEDMKKPPLGFPQTSVTSVRTFEARDFLYVFKSFHNGPTLYDRIQSGLRGCSAILAKTCSQMEGPYIKYVEAQFNKPVFLIGPVVPDPPSGKLEEKWATWLNKFEGGTVIYCSFGSETFLTDDQVKELALGLEQTGLPFFLVLNFPANVDVSAELNRALPEGFLERVKDKGIIHSGWVQQQNILAHSSVGCYVCHAGFSSVIEALVNDCQVVMLPQKGDQILNAKLVSGDMEAGVEINRRDEDGYFGKEDIKEAVEKVMVDVEKDPGKLIRENQKKWKEFLLNKDIQSKYIGNLVNEMTAMAKVSTT.

Belongs to the UDP-glycosyltransferase family. As to expression, expressed in petals, styles and anthers.

The protein operates within pigment biosynthesis; anthocyanin biosynthesis. In terms of biological role, controls the rhamnosylation of reddish anthocyanidin-3-O-glucosides, which is the first step in a series of modifications that finally yield magenta or blue/purple coloured anthocyanins. Controls the conversion of anthocyanidin-3-O-glucosides to anthocyanidin-3-O-rutinosides. This chain is Anthocyanidin-3-O-glucoside rhamnosyltransferase, found in Petunia hybrida (Petunia).